A 44-amino-acid polypeptide reads, in one-letter code: uncharacterized protein (44 aa).

The segment at 22-44 (LNSAPAFKSSQNTSTQAKPTFSN) is disordered.

This is an uncharacterized protein from Dictyostelium discoideum (Social amoeba).